The following is a 319-amino-acid chain: Malate dehydrogenase (319 aa).

Residues 10–15 (GAGNIG) and aspartate 34 each bind NAD(+). Positions 83 and 89 each coordinate substrate. Residues asparagine 96 and 119–121 (ITN) contribute to the NAD(+) site. Substrate contacts are provided by asparagine 121 and arginine 152. Residue histidine 176 is the Proton acceptor of the active site.

It belongs to the LDH/MDH superfamily. MDH type 3 family.

It catalyses the reaction (S)-malate + NAD(+) = oxaloacetate + NADH + H(+). Functionally, catalyzes the reversible oxidation of malate to oxaloacetate. The sequence is that of Malate dehydrogenase from Francisella tularensis subsp. mediasiatica (strain FSC147).